A 125-amino-acid chain; its full sequence is Type-4 ice-structuring protein (125 aa).

A signal peptide spans 1–20 (MKYTLIAAIVVLALAQGTLA).

This sequence belongs to the apolipoprotein A1/A4/E family.

The protein localises to the secreted. Its function is as follows. Antifreeze proteins lower the blood freezing point. The polypeptide is Type-4 ice-structuring protein (Gadus morhua (Atlantic cod)).